An 81-amino-acid chain; its full sequence is HssA/B-like protein 5 (81 aa).

Belongs to the hssA/B family.

The sequence is that of HssA/B-like protein 5 (hssl5) from Dictyostelium discoideum (Social amoeba).